A 382-amino-acid polypeptide reads, in one-letter code: Trophoblast glycoprotein-like (382 aa).

A signal peptide spans 1 to 26 (MAPRAGQPGLQGLLLVAAALSQPAAP). 2 cysteine pairs are disulfide-bonded: cysteine 27–cysteine 33 and cysteine 31–cysteine 43. Residues 27–307 (CPFQCYCFGG…EAAGPELEAS (281 aa)) are Extracellular-facing. LRR repeat units lie at residues 57-80 (PPDA…AFAG), 93-116 (LPLL…AFDG), 117-140 (LPSL…AFRG), 171-194 (LAEL…ALRL), and 196-217 (RLEQ…ELRA). Asparagine 62 carries an N-linked (GlcNAc...) asparagine glycan. Cystine bridges form between cysteine 238/cysteine 264 and cysteine 240/cysteine 285. The chain crosses the membrane as a helical span at residues 308–328 (YVFFGLVLALIGLIFLMVLYL). Over 329–382 (NRRGIQRWMRNLREACRDQMEGYHYRYEQDADPRRAPAPAAPAGSRATSPGSGL) the chain is Cytoplasmic. Residues 358–382 (DADPRRAPAPAAPAGSRATSPGSGL) form a disordered region. Low complexity predominate over residues 365–382 (PAPAAPAGSRATSPGSGL).

It localises to the membrane. This chain is Trophoblast glycoprotein-like (TPBGL), found in Homo sapiens (Human).